A 90-amino-acid chain; its full sequence is UPF0235 protein CPn_0497/CP_0257/CPj0497/CpB0517 (90 aa).

It belongs to the UPF0235 family.

The polypeptide is UPF0235 protein CPn_0497/CP_0257/CPj0497/CpB0517 (Chlamydia pneumoniae (Chlamydophila pneumoniae)).